A 382-amino-acid chain; its full sequence is F-box/LRR-repeat/kelch-repeat protein At1g09650 (382 aa).

One can recognise an F-box domain in the interval 7 to 52 (CLMMESLPHEVVECILERLDADPLLRFKAVSKQWKSTIESPFFQRR). One copy of the LRR 1 repeat lies at 78–101 (IEALTTLVLGSSSSVKIPTPWEEE). One copy of the Kelch 1 repeat lies at 180-227 (PVWLYNSIEIGLENATTCEVFDFSTNAWRYVSPAAPYRIVGCPAPVCV). The LRR 2 repeat unit spans residues 239 to 262 (ETKILSFDLHTETFQVVSKAPFAN). One copy of the Kelch 2 repeat lies at 270–319 (MCNLDNRLCVSEMKLPNQVIWSFNSGNKTWHKMCSINLDITSRWFGPTQV).

The chain is F-box/LRR-repeat/kelch-repeat protein At1g09650 from Arabidopsis thaliana (Mouse-ear cress).